The primary structure comprises 695 residues: Spermidine/spermine N(1)-acetyltransferase-like protein 1 (695 aa).

Polar residues-rich tracts occupy residues 1–39 (MNQS…QGSA), 52–68 (PSMS…NLPD), and 78–98 (DTWQ…SQLV). Disordered stretches follow at residues 1–274 (MNQS…MNQM), 290–332 (DMKQ…PGMW), 344–375 (ASIS…NQSG), and 387–493 (RQSG…GLSQ). Low complexity predominate over residues 105 to 122 (SQPDPSQPGPSQSGPSQS). 7 stretches are compositionally biased toward polar residues: residues 123–179 (RMRQ…TGLS), 197–208 (GVQQPGISQQVP), 231–266 (PDTS…QPSP), 294–310 (PSMS…NLPD), 355–375 (APSQ…NQSG), 389–422 (SGGS…TGLS), and 459–471 (PGTS…QTGM). Positions 529–695 (FQIRHAEAGD…EELLDMAWEE (167 aa)) constitute an N-acetyltransferase domain. Substrate is bound at residue 552–553 (CE). Residues 618–620 (FYV) and 626–631 (GLGIGA) contribute to the acetyl-CoA site. Substrate is bound by residues 650–652 (HFL) and Glu676.

Belongs to the acetyltransferase family.

This chain is Spermidine/spermine N(1)-acetyltransferase-like protein 1 (SATL1), found in Homo sapiens (Human).